The sequence spans 1097 residues: Mitochondrial distribution and morphology protein 34 (1097 aa).

The 198-residue stretch at 1–198 folds into the SMP-LTD domain; the sequence is MSFNFKWPTF…LPGIIHRLSQ (198 aa). Disordered stretches follow at residues 204 to 305, 317 to 343, 390 to 427, 480 to 520, 556 to 600, 645 to 675, 716 to 817, and 923 to 1097; these read EAKS…PLHS, AAFP…SGFS, QSDD…LDAV, DDQP…TSSL, PEVD…SSRT, LDAE…RDLS, GQNA…SPGV, and GSSA…AIRE. A compositionally biased stretch (basic and acidic residues) spans 205-229; it reads AKSEKDKVKQKAEAEEPPARSREPT. Over residues 252-263 the composition is skewed to basic residues; it reads RKSHSKAKKHSR. The span at 274 to 283 shows a compositional bias: low complexity; it reads SPCQSPQRPR. Positions 284-293 are enriched in basic residues; the sequence is QSPRRPRHVA. Residues 406–416 are compositionally biased toward basic and acidic residues; it reads SSSHDGKHDEG. Composition is skewed to low complexity over residues 508 to 519 and 572 to 586; these read SSRSDRSACTSS and GGTP…RFGS. Polar residues predominate over residues 662 to 675; the sequence is TNPTSRESSYRDLS. Over residues 759 to 779 the composition is skewed to low complexity; it reads GMSATPARTRASAAASARSRP. Positions 784–796 are enriched in polar residues; the sequence is YATSPPGDSSGWQ. Residues 923 to 943 show a composition bias toward low complexity; that stretch reads GSSAASGTGTTSGSSQTGANA. Residues 1004–1024 show a composition bias toward polar residues; the sequence is SNKPNNTSTGQGEDSQDNSAA. Residues 1045–1059 are compositionally biased toward low complexity; that stretch reads ASGSSASSAITDSSS.

The protein belongs to the MDM34 family. Component of the ER-mitochondria encounter structure (ERMES) or MDM complex, composed of MMM1, MDM10, MDM12 and MDM34.

Its subcellular location is the mitochondrion outer membrane. Component of the ERMES/MDM complex, which serves as a molecular tether to connect the endoplasmic reticulum (ER) and mitochondria. Components of this complex are involved in the control of mitochondrial shape and protein biogenesis, and function in nonvesicular lipid trafficking between the ER and mitochondria. MDM34 is required for the interaction of the ER-resident membrane protein MMM1 and the outer mitochondrial membrane-resident beta-barrel protein MDM10. This chain is Mitochondrial distribution and morphology protein 34, found in Mycosarcoma maydis (Corn smut fungus).